A 236-amino-acid polypeptide reads, in one-letter code: 2-C-methyl-D-erythritol 4-phosphate cytidylyltransferase (236 aa).

This sequence belongs to the IspD/TarI cytidylyltransferase family. IspD subfamily. In terms of assembly, homodimer.

It carries out the reaction 2-C-methyl-D-erythritol 4-phosphate + CTP + H(+) = 4-CDP-2-C-methyl-D-erythritol + diphosphate. The protein operates within isoprenoid biosynthesis; isopentenyl diphosphate biosynthesis via DXP pathway; isopentenyl diphosphate from 1-deoxy-D-xylulose 5-phosphate: step 2/6. Its function is as follows. Catalyzes the formation of 4-diphosphocytidyl-2-C-methyl-D-erythritol from CTP and 2-C-methyl-D-erythritol 4-phosphate (MEP). The chain is 2-C-methyl-D-erythritol 4-phosphate cytidylyltransferase from Cronobacter sakazakii (strain ATCC BAA-894) (Enterobacter sakazakii).